The following is a 178-amino-acid chain: Large ribosomal subunit protein uL6 (178 aa).

Belongs to the universal ribosomal protein uL6 family. As to quaternary structure, part of the 50S ribosomal subunit.

Its function is as follows. This protein binds to the 23S rRNA, and is important in its secondary structure. It is located near the subunit interface in the base of the L7/L12 stalk, and near the tRNA binding site of the peptidyltransferase center. The chain is Large ribosomal subunit protein uL6 from Lactococcus lactis subsp. cremoris (strain MG1363).